A 373-amino-acid polypeptide reads, in one-letter code: Chaperone protein DnaJ (373 aa).

The J domain maps to 5–70 (DYYEVLGVAK…QKRAAYDRYG (66 aa)). The CR-type zinc-finger motif lies at 133-211 (GFDTEIRVPS…CDGVGRTRRN (79 aa)). Residues cysteine 146, cysteine 149, cysteine 163, cysteine 166, cysteine 185, cysteine 188, cysteine 199, and cysteine 202 each contribute to the Zn(2+) site. CXXCXGXG motif repeat units follow at residues 146-153 (CDTCHGSG), 163-170 (CRTCGGSG), 185-192 (CPTCHGTG), and 199-206 (CPSCDGVG).

It belongs to the DnaJ family. In terms of assembly, homodimer. Zn(2+) serves as cofactor.

The protein localises to the cytoplasm. In terms of biological role, participates actively in the response to hyperosmotic and heat shock by preventing the aggregation of stress-denatured proteins and by disaggregating proteins, also in an autonomous, DnaK-independent fashion. Unfolded proteins bind initially to DnaJ; upon interaction with the DnaJ-bound protein, DnaK hydrolyzes its bound ATP, resulting in the formation of a stable complex. GrpE releases ADP from DnaK; ATP binding to DnaK triggers the release of the substrate protein, thus completing the reaction cycle. Several rounds of ATP-dependent interactions between DnaJ, DnaK and GrpE are required for fully efficient folding. Also involved, together with DnaK and GrpE, in the DNA replication of plasmids through activation of initiation proteins. The polypeptide is Chaperone protein DnaJ (Bordetella bronchiseptica (strain ATCC BAA-588 / NCTC 13252 / RB50) (Alcaligenes bronchisepticus)).